The chain runs to 112 residues: UPF0060 membrane protein AAur_4166 (112 aa).

The next 4 membrane-spanning stretches (helical) occupy residues 8–28 (ILFVLAAVAEIGGAWLIWQAV), 33–53 (AWWWAGLGVVALGIYGFFAAF), 62–82 (VLAAYGGVFIAGSLGWGMLMD), and 91–111 (VIGAAICIVGVGVIMFAPRPG).

This sequence belongs to the UPF0060 family.

Its subcellular location is the cell membrane. The chain is UPF0060 membrane protein AAur_4166 from Paenarthrobacter aurescens (strain TC1).